Here is a 97-residue protein sequence, read N- to C-terminus: Serine protease inhibitor Kazal-type 13 (97 aa).

Positions 1-26 are cleaved as a signal peptide; that stretch reads MTRRGCWPHRIIFSLILLTWTHVTLA. A Kazal-like domain is found at 36-97; sequence NWPKPPCKMY…IEFVKYGKCE (62 aa). 3 disulfides stabilise this stretch: C42/C78, C56/C75, and C64/C96.

As to expression, restricted to the epididymis, with highest levels in the initial segment, including epithelial cells, lumen, and sperm (at protein level). Localizes to the sperm heads, where it is restricted to the acrosomal region in epididymal spermatozoa, but not in testicular spermatozoa (at protein level).

The protein resides in the secreted. May be a serine protease inhibitor. Essential for sperm maturation and fertility. Inhibits sperm acrosome reaction, protecting sperm from premature reaction. The protein is Serine protease inhibitor Kazal-type 13 (Spink13) of Rattus norvegicus (Rat).